The following is a 967-amino-acid chain: RNA polymerase-associated protein RapA (967 aa).

The 170-residue stretch at 163 to 332 folds into the Helicase ATP-binding domain; it reads EVGRRHAPRV…FARLRLLDPD (170 aa). 176-183 lines the ATP pocket; sequence DEVGLGKT. Residues 278–281 carry the DEAH box motif; sequence DEAH. A Helicase C-terminal domain is found at 491–639; that stretch reads RVDWLIDFLK…LCAFELTCPG (149 aa).

The protein belongs to the SNF2/RAD54 helicase family. RapA subfamily. Interacts with the RNAP. Has a higher affinity for the core RNAP than for the holoenzyme. Its ATPase activity is stimulated by binding to RNAP.

In terms of biological role, transcription regulator that activates transcription by stimulating RNA polymerase (RNAP) recycling in case of stress conditions such as supercoiled DNA or high salt concentrations. Probably acts by releasing the RNAP, when it is trapped or immobilized on tightly supercoiled DNA. Does not activate transcription on linear DNA. Probably not involved in DNA repair. This chain is RNA polymerase-associated protein RapA, found in Shewanella amazonensis (strain ATCC BAA-1098 / SB2B).